We begin with the raw amino-acid sequence, 383 residues long: Homeobox protein SHOOT MERISTEMLESS (383 aa).

Positions H37–Y58 are disordered. The ELK domain maps to E263 to F283. The segment at residues M284–S347 is a DNA-binding region (homeobox; TALE-type).

The protein belongs to the TALE/KNOX homeobox family.

It localises to the nucleus. Functionally, required for shoot apical meristem formation during embryogenesis. Probably binds to the DNA sequence 5'-TGAC-3'. In Brassica oleracea (Wild cabbage), this protein is Homeobox protein SHOOT MERISTEMLESS (STM).